The following is a 289-amino-acid chain: Protease HtpX homolog (289 aa).

2 consecutive transmembrane segments (helical) span residues Leu-5–Ile-27 and Ala-40–Asn-60. His-133 contributes to the Zn(2+) binding site. The active site involves Glu-134. Residue His-137 participates in Zn(2+) binding. 2 consecutive transmembrane segments (helical) span residues Thr-143–Ala-163 and Ile-181–Ala-201. Residue Glu-207 coordinates Zn(2+).

Belongs to the peptidase M48B family. It depends on Zn(2+) as a cofactor.

It localises to the cell membrane. The polypeptide is Protease HtpX homolog (Pyrococcus furiosus (strain ATCC 43587 / DSM 3638 / JCM 8422 / Vc1)).